Consider the following 592-residue polypeptide: V-type ATP synthase alpha chain (592 aa).

233 to 240 serves as a coordination point for ATP; sequence GPFGSGKT.

The protein belongs to the ATPase alpha/beta chains family.

It catalyses the reaction ATP + H2O + 4 H(+)(in) = ADP + phosphate + 5 H(+)(out). In terms of biological role, produces ATP from ADP in the presence of a proton gradient across the membrane. The V-type alpha chain is a catalytic subunit. The chain is V-type ATP synthase alpha chain from Clostridium botulinum (strain Okra / Type B1).